Reading from the N-terminus, the 95-residue chain is Ribonuclease kappa (95 aa).

2 helical membrane passes run 12 to 32 and 68 to 88; these read GLII…FFYI and CWIA…QFYM.

This sequence belongs to the RNase K family.

The protein resides in the membrane. Functionally, endoribonuclease. Its function is as follows. (Microbial infection) Required for the initial stages of clathrin-mediated endocytic uptake of a diverse set of flaviviruses, including dengue and West Nile. Not required for clathrin-mediated endocytosis and macropinocytosis. The protein is Ribonuclease kappa of Drosophila melanogaster (Fruit fly).